The primary structure comprises 50 residues: Fungus-induced protein 3 (50 aa).

This chain is Fungus-induced protein 3 (fip-3), found in Caenorhabditis elegans.